The chain runs to 31 residues: Jingzhaotoxin F7-15.33 (31 aa).

Cystine bridges form between Cys-2–Cys-16, Cys-9–Cys-21, and Cys-15–Cys-28.

The protein belongs to the neurotoxin 10 (Hwtx-1) family. In terms of tissue distribution, expressed by the venom gland.

The protein localises to the secreted. Probable ion channel inhibitor. The protein is Jingzhaotoxin F7-15.33 of Chilobrachys guangxiensis (Chinese earth tiger tarantula).